The following is a 211-amino-acid chain: MSVGILGTKLGMTQIFDEAGVAIPVTVVQVGPCVVTQVKSKQTDGYAAIQVGYGEVKPKALNRPLLGHLAKSSAPALRHLKEYHTDGSSDYALGQEIKADIFSVGELVDVIGTSIGRGFAGNQKRNNFGRGPMSHGSKNHRAPGSIGAGTTPGRVYPGKRMAGRLGGTRVTIRKLTVIRVDAERNLLLIKGAVPGKPGALLSIVPAKKVGK.

The segment at 122-156 (NQKRNNFGRGPMSHGSKNHRAPGSIGAGTTPGRVY) is disordered.

The protein belongs to the universal ribosomal protein uL3 family. Part of the 50S ribosomal subunit. Forms a cluster with proteins L14 and L19.

One of the primary rRNA binding proteins, it binds directly near the 3'-end of the 23S rRNA, where it nucleates assembly of the 50S subunit. This is Large ribosomal subunit protein uL3 from Nostoc sp. (strain PCC 7120 / SAG 25.82 / UTEX 2576).